The primary structure comprises 96 residues: Putative pterin-4-alpha-carbinolamine dehydratase (96 aa).

The protein belongs to the pterin-4-alpha-carbinolamine dehydratase family.

The enzyme catalyses (4aS,6R)-4a-hydroxy-L-erythro-5,6,7,8-tetrahydrobiopterin = (6R)-L-erythro-6,7-dihydrobiopterin + H2O. This is Putative pterin-4-alpha-carbinolamine dehydratase from Prochlorococcus marinus (strain SARG / CCMP1375 / SS120).